A 68-amino-acid chain; its full sequence is Copper transport protein ATOX1 (68 aa).

In terms of domain architecture, HMA spans 1 to 63 (MPKHEFSVDM…TLGKTGKAVS (63 aa)). Residues cysteine 12 and cysteine 15 each contribute to the Cu cation site. Phosphoserine is present on serine 47. N6-acetyllysine is present on lysine 60.

This sequence belongs to the ATX1 family. Homodimer. Interacts with ATP7B. Interacts with ATP7A. Interacts (via dimer form) with SLC31A1 (via C-terminal domain); this interaction improves ATOX1 stability and controls intracellular Cu(I) levels.

Binds and deliver cytosolic copper to the copper ATPase proteins. May be important in cellular antioxidant defense. The chain is Copper transport protein ATOX1 from Bos taurus (Bovine).